Here is a 135-residue protein sequence, read N- to C-terminus: DNA-binding protein inhibitor ID-2-B (135 aa).

The region spanning 23–75 (ARSKAPVDEPMSLLYNMNDCYSKLKELVPSIPPNKKVSKMEILQHVIDYILDL) is the bHLH domain. The Nuclear export signal signature appears at 108-117 (LNTDISILSL).

In terms of assembly, heterodimer with other HLH proteins.

It is found in the cytoplasm. Its subcellular location is the nucleus. Transcriptional regulator (lacking a basic DNA binding domain) which negatively regulates the basic helix-loop-helix (bHLH) transcription factors by forming heterodimers and inhibiting their DNA binding and transcriptional activity. Inhibits the activity of both neurogenic (neurod1/neuroD) and myogenic (myod1/myoD) bHLH factors. May play a role in the regulation of the circadian clock. This chain is DNA-binding protein inhibitor ID-2-B (id2-b), found in Xenopus laevis (African clawed frog).